We begin with the raw amino-acid sequence, 402 residues long: Multidrug resistance protein MdtH (402 aa).

The next 10 helical transmembrane spans lie at 13–33 (YFLLIDNLLVVLGFFVVFPLI), 34–54 (SIRFVDQLGWAALIVGIALGL), 99–116 (PWILWASCTLSALGGTLF), 139–159 (LLMMQDSAGAVIGALIGSWLL), 165–185 (YVCWAGAALFVLAAAWNAWLL), 214–234 (VLTLTGYYMLAVQVMLMLPIM), 244–264 (AVKWMYAIEAALSLTLLYPIA), 277–297 (LMFGLLLMTLSLFPLGLSTTL), 340–360 (LGLALGGALGYTGGGWMYDMG), and 368–388 (LPWALLGIIGMLTLALLYWQF).

Belongs to the major facilitator superfamily. DHA1 family. MdtH (TC 2.A.1.2.21) subfamily.

Its subcellular location is the cell inner membrane. The sequence is that of Multidrug resistance protein MdtH from Edwardsiella ictaluri (strain 93-146).